Reading from the N-terminus, the 473-residue chain is Sphingosine kinase 1 (473 aa).

One can recognise a DAGKc domain in the interval 83–233; that stretch reads QCRGNLLVFI…VALYSVKTDN (151 aa). ATP-binding positions include 93–95 and 125–129; these read NPN and TTGPN. 151–154 serves as a coordination point for substrate; it reads SGDG. The active-site Proton donor/acceptor is the Asp-153. ATP-binding positions include Glu-158 and 184 to 186; that span reads GSG. Asp-251 contacts substrate. ATP contacts are provided by residues Arg-258, Arg-265, and 448–450; that span reads DGE.

Mg(2+) is required as a cofactor. As to expression, expressed in the majority of cholinergic and GABAergic neurons, body wall muscle, excretory canal cells, intestine, and hypodermis.

The protein localises to the presynaptic cell membrane. Its subcellular location is the cell projection. The protein resides in the axon. It is found in the perikaryon. It localises to the mitochondrion membrane. It carries out the reaction a sphingoid base + ATP = a sphingoid 1-phosphate + ADP + H(+). It catalyses the reaction 15-methylhexadecasphing-4-enine + ATP = 15-methylhexadecasphing-4-enine 1-phosphate + ADP + H(+). The catalysed reaction is 15-methylhexadecasphinganine + ATP = 15-methylhexadecasphinganine 1-phosphate + ADP + H(+). The protein operates within lipid metabolism; sphingolipid metabolism. Its function is as follows. Catalyzes the phosphorylation of sphingoid bases to form sphingoid 1-phosphate (SPP), which have both intra- and extracellular functions. C.elegans contain specific sphingoid bases, which are unique or different in structure compared to the sphingoid bases found in other animals. Two examples of these distinctive compounds are: 15-methylhexadecasphinganine and 15-methylhexadecasphing-4-enine. Required for neurotransmitter release from neuromuscular junctions. Acts by recruiting the synaptic vesicle priming protein unc-13 to synapses. The sequence is that of Sphingosine kinase 1 (sphk-1) from Caenorhabditis elegans.